We begin with the raw amino-acid sequence, 314 residues long: Olfactory receptor 5P81 (314 aa).

At 1-28 (MAFLEDGNHTVVTEFILLGLTDDPVLRV) the chain is on the extracellular side. The N-linked (GlcNAc...) asparagine glycan is linked to asparagine 8. Residues 29–49 (ILFIIILCIYLVTVSGNLSTI) traverse the membrane as a helical segment. Over 50–57 (LLIRVSSQ) the chain is Cytoplasmic. A helical transmembrane segment spans residues 58-78 (LHHPMYFFLSHLASIDIAISS). Topologically, residues 79-102 (SVTPNMVVNFLVERSSISYIGCGI) are extracellular. Residues cysteine 100 and cysteine 192 are joined by a disulfide bond. The helical transmembrane segment at 103-123 (QLGSAVFFGAIECFLLAVMAY) threads the bilayer. Residues 124 to 136 (DRFVAICNPLLYS) lie on the Cytoplasmic side of the membrane. Residues 137–157 (TKMSKQVCIQLLVGSYIGGFI) traverse the membrane as a helical segment. The Extracellular segment spans residues 158–199 (HASFFTLSFVSFLFCGPNRINHFFCDFTPLVELSCSDNSVLI). Residues 200-220 (ILDSFSTGTIIVITVFVIAIS) traverse the membrane as a helical segment. Over 221 to 240 (YTCILITILKMHSTEGRHKA) the chain is Cytoplasmic. The chain crosses the membrane as a helical span at residues 241–261 (FSTCTSHLTVVTLLYGTVTFI). Topologically, residues 262–274 (YVMPKSSYSTDQN) are extracellular. The chain crosses the membrane as a helical span at residues 275-295 (KVISVFYMVVIPMLNPIIYSL). Residues 296 to 314 (RNNEIKGALKKQLGEKNIF) are Cytoplasmic-facing.

Belongs to the G-protein coupled receptor 1 family.

It is found in the cell membrane. Its function is as follows. Potential odorant receptor. The chain is Olfactory receptor 5P81 from Mus musculus (Mouse).